A 112-amino-acid chain; its full sequence is Putative pterin-4-alpha-carbinolamine dehydratase (112 aa).

It belongs to the pterin-4-alpha-carbinolamine dehydratase family.

The enzyme catalyses (4aS,6R)-4a-hydroxy-L-erythro-5,6,7,8-tetrahydrobiopterin = (6R)-L-erythro-6,7-dihydrobiopterin + H2O. The polypeptide is Putative pterin-4-alpha-carbinolamine dehydratase (Vibrio parahaemolyticus serotype O3:K6 (strain RIMD 2210633)).